The chain runs to 253 residues: Probable transcriptional regulatory protein Tery_2125 (253 aa).

The protein belongs to the TACO1 family.

It localises to the cytoplasm. This is Probable transcriptional regulatory protein Tery_2125 from Trichodesmium erythraeum (strain IMS101).